Reading from the N-terminus, the 669-residue chain is Trifunctional UDP-glucose 4,6-dehydratase/UDP-4-keto-6-deoxy-D-glucose 3,5-epimerase/UDP-4-keto-L-rhamnose-reductase RHM1 (669 aa).

NAD(+) is bound at residue 13–19 (GAAGFIA). T132 provides a ligand contact to substrate. D133 serves as the catalytic Proton donor. Residues E134 and Y159 each act as proton acceptor in the active site. An NADP(+)-binding site is contributed by 391–397 (GKTGWIG).

In the N-terminal section; belongs to the NAD(P)-dependent epimerase/dehydratase family. dTDP-glucose dehydratase subfamily. This sequence in the C-terminal section; belongs to the dTDP-4-dehydrorhamnose reductase family. NAD(+) serves as cofactor. NADP(+) is required as a cofactor. In terms of tissue distribution, expressed in roots, stems, leaves, seedlings, inflorescence tips, and siliques. Detected in the adaxial side of cotyledons, in the emerging leaves and in trichomes. Also detected in the root tip, more precisely in the epidermal cells in the meristematic and elongation zone.

The protein resides in the cytoplasm. It localises to the cytosol. The enzyme catalyses UDP-alpha-D-glucose = UDP-4-dehydro-6-deoxy-alpha-D-glucose + H2O. The protein operates within carbohydrate biosynthesis. In terms of biological role, trifunctional enzyme involved in UDP-beta-L-rhamnose biosynthesis, a precursor of the primary cell wall components rhamnogalacturonan I (RG-I) and rhamnogalacturonan II (RG-II). Plays a major role in supplying UDP-rhamnose for flavonol biosynthesis. Catalyzes the dehydration of UDP-glucose to form UDP-4-dehydro-6-deoxy-D-glucose followed by the epimerization of the C3' and C5' positions of UDP-4-dehydro-6-deoxy-D-glucose to form UDP-4-keto-beta-L-rhamnose and the reduction of UDP-4-keto-beta-L-rhamnose to yield UDP-beta-L-rhamnose. This Arabidopsis thaliana (Mouse-ear cress) protein is Trifunctional UDP-glucose 4,6-dehydratase/UDP-4-keto-6-deoxy-D-glucose 3,5-epimerase/UDP-4-keto-L-rhamnose-reductase RHM1.